Consider the following 111-residue polypeptide: MSGYFVLKASGTQYMFNLHAGNHEIILTSERYTSKASAQDGIASVQKNAPDDARYQRLTAKDGSPYFSLTATNGQSIGRSEMYKTTQARDNGIASVKSNAPGAPTKDQTQA.

Tandem repeats lie at residues 9 to 57 and 60 to 108. A disordered region spans residues 86-111; sequence TQARDNGIASVKSNAPGAPTKDQTQA.

The protein belongs to the UPF0339 family. Duplicated subfamily.

The polypeptide is UPF0339 protein BP0521 (Bordetella pertussis (strain Tohama I / ATCC BAA-589 / NCTC 13251)).